The primary structure comprises 816 residues: MDIGCKVLVFFTCFLTVTAEIYIVTMEGEPIISYKGGDNGFEATAVESDEKIDTTSELVTSYARHLERKHDMLLGMLFVEGSYKKLYSYKHLINGFAAHVSPDQAEMLRRAPGVKSVDRDWKVRKLTTHTPQFLGLPTDVWPTGGGYDRAGEDIVIGFIDSGIFPHHPSFASHHTTVPYGPHPSYKGKCEEDPHTKISFCNGKIIGAQHFAEAAKAAGAFNPDIDFASPMDGDGHGSHTAAIAAGNNGIPVRMHGYEFGKASGMAPRARIAVYKALYRLFGGFVADVVAAIDQAVHDGVDILSLSVGPNSPPATTKTTFLNPFDATLLGAVKAGVFVAQAAGNGGPFPKTLVSYSPWITTVAAAIDDRRYKNHLTLGNGKMLAGIGLSPSTRPHRSYKMVSANDVLLGSSGMKYNPSDCQKPEVLNKKLVEGNILLCGYSFNFVAGSASIKKVAETAKHLGAAGFVLVVENVSPGTKFDPVPSCIPGILITDVSKSMDLIDYYNVTTSRDWMGRVKDFKAEGSIGDGLEPILHKSAPEVALFSARGPNTKDFSFQDADLLKPDILAPGSLIWSAWSANGTDEANYIGEGFALISGTSMAAPHIAGIAALVKQKHPQWSPAAIKSALMTTSTVIDRAGRPLQAQQYSETETVTLVKATPFDYGSGHVNPSAALDPGLIFDAGYEDYIGFLCTTPGIDAHEIKNFTNTPCNFKMVHPSNFNTPSIAISHLVRTQTVTRRVTNVAEEEETYTITSRMEPAIAIEVSPPAMTVRAGASRTFSVTLTVRSVTGAYSFGQVTLKGSRGHKVTLPVVAMGQRR.

A signal peptide spans 1-19 (MDIGCKVLVFFTCFLTVTA). A propeptide spans 20–126 (EIYIVTMEGE…VDRDWKVRKL (107 aa)) (activation peptide). Residues 22–124 (YIVTMEGEPI…KSVDRDWKVR (103 aa)) enclose the Inhibitor I9 domain. The Peptidase S8 domain maps to 120–672 (DWKVRKLTTH…SGHVNPSAAL (553 aa)). Active-site charge relay system residues include D160 and H235. Residues 418–492 (DCQKPEVLNK…SCIPGILITD (75 aa)) form the PA domain. N-linked (GlcNAc...) asparagine glycosylation is found at N504 and N578. The Charge relay system role is filled by S597. N-linked (GlcNAc...) asparagine glycosylation occurs at N702.

The protein belongs to the peptidase S8 family.

It localises to the secreted. The sequence is that of Subtilisin-like protease SBT2.6 from Arabidopsis thaliana (Mouse-ear cress).